Here is a 47-residue protein sequence, read N- to C-terminus: Large ribosomal subunit protein bL34 (47 aa).

The protein belongs to the bacterial ribosomal protein bL34 family.

This is Large ribosomal subunit protein bL34 from Mycobacterium tuberculosis (strain ATCC 25177 / H37Ra).